A 378-amino-acid chain; its full sequence is L-lactate dehydrogenase (378 aa).

Residues 1–378 (MIISASTDYR…ELSRDSLVKR (378 aa)) enclose the FMN hydroxy acid dehydrogenase domain. Tyrosine 24 contacts substrate. FMN-binding residues include serine 106 and glutamine 127. Tyrosine 129 lines the substrate pocket. Threonine 155 contributes to the FMN binding site. Substrate is bound at residue arginine 164. Residue lysine 251 participates in FMN binding. Catalysis depends on histidine 275, which acts as the Proton acceptor. A substrate-binding site is contributed by arginine 278. Residue 306–330 (DSGIRTGLDVVRMLALGADCTMLGR) participates in FMN binding.

This sequence belongs to the FMN-dependent alpha-hydroxy acid dehydrogenase family. FMN serves as cofactor.

The protein resides in the cell inner membrane. The enzyme catalyses (S)-lactate + A = pyruvate + AH2. Its function is as follows. Catalyzes the conversion of L-lactate to pyruvate. Is coupled to the respiratory chain. This Vibrio cholerae serotype O1 (strain ATCC 39315 / El Tor Inaba N16961) protein is L-lactate dehydrogenase.